A 524-amino-acid polypeptide reads, in one-letter code: Alkaline phosphatase, tissue-nonspecific isozyme (524 aa).

An N-terminal signal peptide occupies residues Met1–Ser17. A Mg(2+)-binding site is contributed by Asp60. 2 residues coordinate Zn(2+): Asp60 and Ser110. Ser110 acts as the Phosphoserine intermediate in catalysis. Ser110 carries the post-translational modification Phosphoserine. A disulfide bond links Cys139 and Cys201. Asn140 carries N-linked (GlcNAc...) asparagine glycosylation. Thr173 is a binding site for Mg(2+). Asn230 is a glycosylation site (N-linked (GlcNAc...) asparagine). Glu235 is a Ca(2+) binding site. N-linked (GlcNAc...) asparagine glycosylation is present at Asn271. Residues Phe290 and Glu291 each coordinate Ca(2+). An N-linked (GlcNAc...) asparagine glycan is attached at Asn303. Residue Asp306 participates in Ca(2+) binding. Glu332 provides a ligand contact to Mg(2+). Zn(2+) contacts are provided by Asp337, His341, Asp378, and His379. Asn430 is a glycosylation site (N-linked (GlcNAc...) asparagine). His454 contacts Zn(2+). Cys489 and Cys497 are oxidised to a cystine. The GPI-anchor amidated serine moiety is linked to residue Ser499. Positions Ala500–Phe524 are cleaved as a propeptide — removed in mature form.

This sequence belongs to the alkaline phosphatase family. As to quaternary structure, homodimer. Requires Mg(2+) as cofactor. It depends on Zn(2+) as a cofactor. The cofactor is Ca(2+). N-glycosylated.

The protein localises to the cell membrane. It is found in the extracellular vesicle membrane. The protein resides in the mitochondrion membrane. Its subcellular location is the mitochondrion intermembrane space. It carries out the reaction a phosphate monoester + H2O = an alcohol + phosphate. The catalysed reaction is diphosphate + H2O = 2 phosphate + H(+). It catalyses the reaction pyridoxal 5'-phosphate + H2O = pyridoxal + phosphate. The enzyme catalyses phosphoethanolamine + H2O = ethanolamine + phosphate. It carries out the reaction N-phosphocreatine + H2O = creatine + phosphate. The catalysed reaction is ATP + H2O = ADP + phosphate + H(+). It catalyses the reaction ADP + H2O = AMP + phosphate + H(+). The enzyme catalyses AMP + H2O = adenosine + phosphate. Phosphatase activity is specifically inhibited by 5-((5-chloro-2-methoxyphenyl)sulfonamido)nicotinamide (SBI-425). Its function is as follows. Alkaline phosphatase that metabolizes various phosphate compounds and plays a key role in skeletal mineralization and adaptive thermogenesis. Has broad substrate specificity and can hydrolyze a considerable variety of compounds: however, only a few substrates, such as diphosphate (inorganic pyrophosphate; PPi), pyridoxal 5'-phosphate (PLP) and N-phosphocreatine are natural substrates. Plays an essential role in skeletal and dental mineralization via its ability to hydrolyze extracellular diphosphate, a potent mineralization inhibitor, to phosphate: it thereby promotes hydroxyapatite crystal formation and increases inorganic phosphate concentration. Acts in a non-redundant manner with PHOSPHO1 in skeletal mineralization: while PHOSPHO1 mediates the initiation of hydroxyapatite crystallization in the matrix vesicles (MVs), ALPL/TNAP catalyzes the spread of hydroxyapatite crystallization in the extracellular matrix. Also promotes dephosphorylation of osteopontin (SSP1), an inhibitor of hydroxyapatite crystallization in its phosphorylated state; it is however unclear whether ALPL/TNAP mediates SSP1 dephosphorylation via a direct or indirect manner. Catalyzes dephosphorylation of PLP to pyridoxal (PL), the transportable form of vitamin B6, in order to provide a sufficient amount of PLP in the brain, an essential cofactor for enzymes catalyzing the synthesis of diverse neurotransmitters. Additionally, also able to mediate ATP degradation in a stepwise manner to adenosine, thereby regulating the availability of ligands for purinergic receptors. Also capable of dephosphorylating microbial products, such as lipopolysaccharides (LPS) as well as other phosphorylated small-molecules, such as poly-inosine:cytosine (poly I:C). Acts as a key regulator of adaptive thermogenesis as part of the futile creatine cycle: localizes to the mitochondria of thermogenic fat cells and acts by mediating hydrolysis of N-phosphocreatine to initiate a futile cycle of creatine dephosphorylation and phosphorylation. During the futile creatine cycle, creatine and N-phosphocreatine are in a futile cycle, which dissipates the high energy charge of N-phosphocreatine as heat without performing any mechanical or chemical work. The sequence is that of Alkaline phosphatase, tissue-nonspecific isozyme (ALPL) from Bos taurus (Bovine).